Here is a 337-residue protein sequence, read N- to C-terminus: Vacuolar protein sorting-associated protein 26B-A (337 aa).

The tract at residues 313-337 (RFEGTSHPETRPQHSGAAAVEQEHE) is disordered.

Belongs to the VPS26 family. In terms of assembly, component of the heterotrimeric retromer cargo-selective complex (CSC) which is believed to associate with variable sorting nexins to form functionally distinct retromer complex variants.

Its subcellular location is the cytoplasm. The protein localises to the endosome membrane. It localises to the early endosome. Acts as a component of the retromer cargo-selective complex (CSC). The CSC is believed to be the core functional component of retromer or respective retromer complex variants acting to prevent missorting of selected transmembrane cargo proteins into the lysosomal degradation pathway. Retromer mediates retrograde transport of cargo proteins from endosomes to the trans-Golgi network (TGN). The polypeptide is Vacuolar protein sorting-associated protein 26B-A (vps26b-a) (Xenopus laevis (African clawed frog)).